The sequence spans 436 residues: MSDSTWMSADPHLASSLSPSQDERMRSPQNLHSQEDDDSSSESGSGNGSSTLNPSTSSSTQGDPAFPEMNGNGAVAPMDFTTAAEDQPINLCDKLPPATALGTASYPSDGCGADGLRSRVKYGVKTTPESPPYSSGSYDSIKTEVSGCPEDLTVGRAPTADDDDDDHDDHEDNDKMNDSEGMDPERLKAFNMFVRLFVDENLDRMVPISKQPKEKIQAIIESCSRQFPEFQERARKRIRTYLKSCRRMKKNGMEMTRPTPPHLTSAMAENILAAACESETRKAAKRMRLEIYQSSQDEPIALDKQHSRDSAAITHSTYSLPASSYSQDPVYANGGLNYSYRGYGALSSNLQPPASLQTGNHSNGPTDLSMKGGASTTSTTPTPTPSSTSTSRPVPTAQLSPTEISAVRQLIAGYRESAAFLLRSADELENLILQQN.

Residues 1–184 (MSDSTWMSAD…KMNDSEGMDP (184 aa)) are disordered. Residues 41–61 (SESGSGNGSSTLNPSTSSSTQ) show a composition bias toward low complexity. S130 carries the post-translational modification Phosphoserine. Residues 160-169 (ADDDDDDHDD) show a composition bias toward acidic residues. Residues 170-184 (HEDNDKMNDSEGMDP) show a composition bias toward basic and acidic residues. S295 bears the Phosphoserine mark. Residues 351–366 (QPPASLQTGNHSNGPT) are compositionally biased toward polar residues. The tract at residues 351–400 (QPPASLQTGNHSNGPTDLSMKGGASTTSTTPTPTPSSTSTSRPVPTAQLS) is disordered. The span at 375-396 (STTSTTPTPTPSSTSTSRPVPT) shows a compositional bias: low complexity.

The sequence is that of Nucleolar protein 4-like (NOL4L) from Homo sapiens (Human).